A 261-amino-acid polypeptide reads, in one-letter code: Membrane protein insertase MisCA (261 aa).

The N-terminal stretch at 1–22 (MLLKRRIGLLLSMVGVFMLLAG) is a signal peptide. Cys-23 carries the N-palmitoyl cysteine lipid modification. Cys-23 is lipidated: S-diacylglycerol cysteine. 5 helical membrane-spanning segments follow: residues 61–81 (YGLS…PLMI), 131–151 (LAGC…YHAI), 174–194 (YILP…MMAG), 204–224 (MMLW…PAAL), and 225–245 (SLYW…IKGP).

Belongs to the OXA1/ALB3/YidC family. Type 2 subfamily. Mostly monomeric, it may also form dimers. Interacts with SpoIIIAE. Forms a complex with the F(1)F(0) ATP synthase in which can be found the alpha, beta, gamma, delta and epsilon subunits of F(1) and a, b and subunits of F(0). YqgA is found in the same complex.

The protein localises to the cell membrane. In terms of biological role, required for the insertion and/or proper folding and/or complex formation of integral membrane proteins into the membrane. Involved in integration of membrane proteins that insert both dependently and independently of the Sec translocase complex, as well as at least some lipoproteins. Also involved in protein secretion processes. Essential for sporulation by activating sigma factor SpoIIIG/SigG after engulfment is completed in the prespore, maybe by acting on SpoIIIAE. It has an overlapping, although partly distinct, function compared to YqjG(MisCB). This chain is Membrane protein insertase MisCA (misCA), found in Bacillus subtilis (strain 168).